Reading from the N-terminus, the 404-residue chain is Serpin-Z2B (404 aa).

Residues Gly-349–Phe-373 are RCL.

It belongs to the serpin family.

Probable serine protease inhibitor. This Oryza sativa subsp. japonica (Rice) protein is Serpin-Z2B.